Here is a 1041-residue protein sequence, read N- to C-terminus: MAFFNPYFKSKNKGSDMPPKQSMSFTKQHKTKESAFLSITPECIIKPKSSKLLKKYNGEQPRLFYNGEPVLLYTVREISQWPVKDIMKVNNGTVDGSCNVVSTSHEPDSPVKNNCEETVVFHIYEQCVFCAHDVSYEYLPWRYKRFLSPTGTIISLIGKTEDGTDVCVNVHGQAYYFYVAMKDEAATRDAVSKVMSNLEKESSSCSYVMKSVNKMSLMGFNTNTSSYLMMIFSNHFVGKEAARNLKDLDFEIFEHLVEPNTRFLVDNEFCSFGWYSLKTPYVRQTSKDSNCELELDCCVGDLQVLRDRVDWPNYKCMAFDIECLSGSVDDAFPDATNPDDIIIQISCVCFDIKNTIETQHLFTLGSCAEIPGVYIYECASEYELIESFLTFVRVYGPNFITGYNINAFDIPYVIGRCRYYNIQCGAFTKMKRGRMTCFKGMESFLNRCQCKVTISGIVIIDMYRVCMDKVSAPNHKLDTVVDMLLGEKKHSVSYKQIPVLFRRDDDGRAVVGAYCVHDSVLVHKLFCKLLFHYEASAIARLSNISINKVVFDGQQSRIFTCMLAAARREGLIIPSIDEAGEDTYQGATVLEPKTGFYNTPVAVFDFASLYPSIIQAYNLCYCTLITDNYVASLREEDITMVTTNTGRVHRFVKPHVRKSILSQLLTSWLAERKAVREKLKHCKDPLMQILLDKQQLALKLTCNAVYGFTGVSKGMFPCLAIAESVTAQGRQLLAVTKQYICDRFNDWTFLTQIAPELVDCPVDSNRFKIDVVYGDTDSVFVLLCGIENADRLYSALPNFVAHITKTLFPPPIKLEVDKVFEKLLLLCKKRYVGVLHGEEKLSMKGIDLVRRNVCGFVKNTTLAVIKSLFSDNVISEAVQKMSGMTQDQVCKEGLPPGFFKLVALITDARERLYENRVDIHELQLSATLTQACDKYKQQNLPHLTVVRKKLERREEIPNTGDRIFYVLLAHPDERVANYVIAEDPDYVETHRLQINCSKYFSNLISSITHSISPIFPEFISKPDRFLMSCVPRKTYPKPILN.

Residues 1–23 (MAFFNPYFKSKNKGSDMPPKQSM) form a disordered region.

Belongs to the DNA polymerase type-B family.

The protein localises to the host nucleus. It catalyses the reaction DNA(n) + a 2'-deoxyribonucleoside 5'-triphosphate = DNA(n+1) + diphosphate. It carries out the reaction Endonucleolytic cleavage to 5'-phosphomonoester.. In terms of biological role, replicates viral genomic DNA. The replication complex is composed of six viral proteins: the DNA polymerase, processivity factor, primase, primase-associated factor, helicase, and ssDNA-binding protein. Additionally, the polymerase contains an intrinsic ribonuclease H (RNase H) activity that specifically degrades RNA/DNA heteroduplexes or duplex DNA substrates in the 5' to 3' direction. Therefore, it can catalyze the excision of the RNA primers that initiate the synthesis of Okazaki fragments at a replication fork during viral DNA replication. The polypeptide is DNA polymerase catalytic subunit (Elephantid herpesvirus 1 (isolate Asian elephant/Berlin/Kiba/1998) (EIHV-1)).